The primary structure comprises 304 residues: UDP-N-acetylenolpyruvoylglucosamine reductase (304 aa).

The FAD-binding PCMH-type domain occupies 33–198 (IGGPADLLVM…LEVVLALQEG (166 aa)). The active site involves Arg-177. The Proton donor role is filled by Ser-227. Glu-297 is a catalytic residue.

This sequence belongs to the MurB family. FAD serves as cofactor.

The protein localises to the cytoplasm. It carries out the reaction UDP-N-acetyl-alpha-D-muramate + NADP(+) = UDP-N-acetyl-3-O-(1-carboxyvinyl)-alpha-D-glucosamine + NADPH + H(+). Its pathway is cell wall biogenesis; peptidoglycan biosynthesis. In terms of biological role, cell wall formation. The sequence is that of UDP-N-acetylenolpyruvoylglucosamine reductase from Alkaliphilus metalliredigens (strain QYMF).